The sequence spans 373 residues: Centrosomal protein of 41 kDa (373 aa).

The interval 89-137 (QRLEDNDSAASDPDAETTARTNGKGNPGEQSPSPEQFINNAGAGDSSRS) is disordered. Ser96 and Ser99 each carry phosphoserine. A compositionally biased stretch (polar residues) spans 106 to 127 (TARTNGKGNPGEQSPSPEQFIN). At Thr109 the chain carries Phosphothreonine. Residue Ser121 is modified to Phosphoserine. Positions 169–266 (PDCPFLLLDV…LAQKFPEGLI (98 aa)) constitute a Rhodanese domain. The interval 275-373 (QQALPPGSAR…SGHLQGKPWK (99 aa)) is disordered. Positions 298–312 (NKWRFTPEDLKKIEY) are enriched in basic and acidic residues. Arg343 is subject to Omega-N-methylarginine. A compositionally biased stretch (polar residues) spans 355 to 366 (SHSNPRSLSSGH).

The protein belongs to the CEP41 family. As to quaternary structure, found in a complex with TTLL6. In terms of tissue distribution, expressed in testis and fetal tissues.

The protein localises to the cytoplasm. It localises to the cytoskeleton. Its subcellular location is the microtubule organizing center. It is found in the centrosome. The protein resides in the cell projection. The protein localises to the cilium. It localises to the cilium basal body. In terms of biological role, required during ciliogenesis for tubulin glutamylation in cilium. Probably acts by participating in the transport of TTLL6, a tubulin polyglutamylase, between the basal body and the cilium. This is Centrosomal protein of 41 kDa (CEP41) from Homo sapiens (Human).